A 148-amino-acid polypeptide reads, in one-letter code: Cystatin-D (148 aa).

Positions 1–33 (MASLLSPSMPVLAAVALTLTLAVIPEASTNAEA) are cleaved as a signal peptide. Residues 36–148 (VVLGGVEPAD…SMTNFNCYNF (113 aa)) enclose the Cystatin kininogen-type domain. 2 cysteine pairs are disulfide-bonded: Cys-101–Cys-111 and Cys-125–Cys-145.

It belongs to the cystatin family. In terms of tissue distribution, in cartilage, expressed mainly in mature chondrocytes including prehypertrophic and hypertrophic cells (at protein level). Expressed exclusively in cartilage.

It is found in the cytoplasm. The protein resides in the cytosol. May play a role in the last steps of the chondrocyte differentiation pathway as an inducer of maturation. Induces chondrocyte calcification during endochondral ossification by playing a role in the transcriptional inhibition of ENPP1, a generator of pyrophosphate which inhibits calcification. Possibly impairs the binding of a transcription factor to the ENPP1 promoter. Unlike other cystatins, does not have thiol protease inhibitor activity. The chain is Cystatin-D from Mus musculus (Mouse).